The primary structure comprises 2148 residues: Polyketide synthase 1 (2148 aa).

Residues 19–261 (FIFGDQSSCN…TPLAVHAPYH (243 aa)) form an N-terminal acylcarrier protein transacylase domain (SAT) region. Residues 394–829 (ESKIAIIGMS…GGNTALLVED (436 aa)) form the Ketosynthase family 3 (KS3) domain. Active-site for beta-ketoacyl synthase activity residues include cysteine 566, histidine 701, and histidine 745. A malonyl-CoA:ACP transacylase (MAT) domain region spans residues 929 to 1233 (AFVFSGQGSQ…PSLMRNKDGW (305 aa)). Catalysis depends on serine 1018, which acts as the For acyl/malonyl transferase activity. Residues 1310 to 1624 (TASVHRIVHE…RKVLNTAMPP (315 aa)) are product template (PT) domain. An N-terminal hotdog fold region spans residues 1314 to 1447 (HRIVHESVEK…SSLHFEQPKV (134 aa)). In terms of domain architecture, PKS/mFAS DH spans 1314-1619 (HRIVHESVEK…FQGIPRKVLN (306 aa)). Histidine 1346 (proton acceptor; for dehydratase activity) is an active-site residue. The tract at residues 1474–1619 (LNSRMSSGVI…FQGIPRKVLN (146 aa)) is C-terminal hotdog fold. The active-site Proton donor; for dehydratase activity is the aspartate 1533. Residues 1619 to 1655 (NTAMPPPKSQNEAPVRSGPAKPAVKPPRSASSEHSGH) form a disordered region. The Carrier 1 domain occupies 1678–1752 (RNPMLPVFKI…DLAAHLGMDT (75 aa)). At serine 1712 the chain carries O-(pantetheine 4'-phosphoryl)serine. Over residues 1755–1790 (ADQSSGQSSSSGGLSPRSDSIGEMTSSATTPPSMSP) the composition is skewed to low complexity. Residues 1755 to 1796 (ADQSSGQSSSSGGLSPRSDSIGEMTSSATTPPSMSPRGSVSG) are disordered. Residues 1793 to 1870 (SVSGSQCKDV…SFKHMFQQGH (78 aa)) form the Carrier 2 domain. Serine 1830 bears the O-(pantetheine 4'-phosphoryl)serine mark. The interval 1882–2146 (LKQYRATSTL…ERVAAFIRSI (265 aa)) is thioesterase (TE) domain. Residue serine 1973 is the For thioesterase activity of the active site.

Functionally, polyketide synthase; part of the Pks1 gene cluster that mediates the biosynthesis of an anthraquinone derivative pigment that contributes to conidial pigmentation that provides protection from UV radiation, heat and cold stress. The polyketide synthase Pks1 produces 1-acetyl-2,4,6,8-tetrahydroxy-9,10-anthraquinone though condensation of acetyl-CoA with malonyl-CoA. The dehydratase EthD and the laccase Mlac1 further convert the anthraquinone derivative into the final conidial pigment. This is Polyketide synthase 1 from Metarhizium brunneum (strain ARSEF 3297).